The chain runs to 311 residues: Olfactory receptor 10J4 (311 aa).

Over 1-29 (MPRPNFMAVTEFTFEGFSIFEWHHRLILF) the chain is Extracellular. The chain crosses the membrane as a helical span at residues 30–50 (VIFLVLYVLTLASNAIILIVI). Residues 51-57 (RLNHQLH) lie on the Cytoplasmic side of the membrane. Residues 58–78 (TPMYFFLSVLSISETYYTVAI) traverse the membrane as a helical segment. The Extracellular portion of the chain corresponds to 79-98 (NPQMLSGLLSPQQTISIPGC). Cysteines 98 and 180 form a disulfide. The chain crosses the membrane as a helical span at residues 99–119 (AAQLFFYLTFGVNKCFLLTAM). At 120–149 (GYDHYVAICNPLQYSVIMGKKACIQLVSGS) the chain is on the cytoplasmic side. A helical membrane pass occupies residues 150–170 (WNIGLSTAIIQVSSVFSLPFC). Residues 171-202 (DANLISHFFCDIRPIMKLACADTTIKEFITLL) are Extracellular-facing. A helical membrane pass occupies residues 203–223 (ISLCVLVLPMVLIFISYVLIV). At 224-237 (TTILKIASAEGRRK) the chain is on the cytoplasmic side. A helical membrane pass occupies residues 238–254 (AFATCASHLTVVIVHYG). Residues 255-272 (RTSFIYLKPKSQNSLQDR) are Extracellular-facing. The helical transmembrane segment at 273–292 (LISVTYTVITPLLNPVVYSL) threads the bilayer. Topologically, residues 293 to 311 (RNKEVKDALLRALGRKPLS) are cytoplasmic.

This sequence belongs to the G-protein coupled receptor 1 family.

Its subcellular location is the cell membrane. Its function is as follows. Odorant receptor. This Homo sapiens (Human) protein is Olfactory receptor 10J4 (OR10J4).